A 295-amino-acid polypeptide reads, in one-letter code: Protoheme IX farnesyltransferase (295 aa).

9 helical membrane passes run 8–28, 35–55, 84–104, 107–127, 132–152, 162–182, 208–228, 233–253, and 264–284; these read VTKP…FLLA, YTLF…GCVF, VSLV…WFGA, LACW…SLYM, VYGT…GYCA, LILL…IAIF, ITLY…GGYA, LVVA…GYKV, and FVFS…DFMV.

Belongs to the UbiA prenyltransferase family. Protoheme IX farnesyltransferase subfamily.

Its subcellular location is the cell inner membrane. It carries out the reaction heme b + (2E,6E)-farnesyl diphosphate + H2O = Fe(II)-heme o + diphosphate. The protein operates within porphyrin-containing compound metabolism; heme O biosynthesis; heme O from protoheme: step 1/1. Its function is as follows. Converts heme B (protoheme IX) to heme O by substitution of the vinyl group on carbon 2 of heme B porphyrin ring with a hydroxyethyl farnesyl side group. The protein is Protoheme IX farnesyltransferase of Enterobacter sp. (strain 638).